The sequence spans 360 residues: 3-dehydroquinate synthase (360 aa).

Residues 69-74 (DGEKYK), 103-107 (GVVGD), 127-128 (TT), Lys-140, Lys-149, and 167-170 (TLDT) each bind NAD(+). Positions 182, 246, and 263 each coordinate Zn(2+).

Belongs to the sugar phosphate cyclases superfamily. Dehydroquinate synthase family. Requires Co(2+) as cofactor. The cofactor is Zn(2+). NAD(+) serves as cofactor.

The protein resides in the cytoplasm. The catalysed reaction is 7-phospho-2-dehydro-3-deoxy-D-arabino-heptonate = 3-dehydroquinate + phosphate. It functions in the pathway metabolic intermediate biosynthesis; chorismate biosynthesis; chorismate from D-erythrose 4-phosphate and phosphoenolpyruvate: step 2/7. Its function is as follows. Catalyzes the conversion of 3-deoxy-D-arabino-heptulosonate 7-phosphate (DAHP) to dehydroquinate (DHQ). The polypeptide is 3-dehydroquinate synthase (Vesicomyosocius okutanii subsp. Calyptogena okutanii (strain HA)).